Reading from the N-terminus, the 71-residue chain is Protein SlyX homolog (71 aa).

Belongs to the SlyX family.

The protein is Protein SlyX homolog of Rhodopseudomonas palustris (strain HaA2).